A 480-amino-acid chain; its full sequence is Bifunctional pantoate ligase/cytidylate kinase (480 aa).

The pantoate--beta-alanine ligase stretch occupies residues 1-243 (MPTMGGLHQG…CGTTRLIDHV (243 aa)). 4–11 (MGGLHQGH) serves as a coordination point for ATP. Histidine 11 functions as the Proton donor in the catalytic mechanism. Glutamine 34 is a (R)-pantoate binding site. Beta-alanine is bound at residue glutamine 34. Residue 123–126 (GEKD) coordinates ATP. Glutamine 129 contributes to the (R)-pantoate binding site. Residues valine 152 and 160–163 (LSSR) contribute to the ATP site. The tract at residues 244–480 (FLMTRQPLVA…GEEAWPTPAG (237 aa)) is cytidylate kinase.

In the N-terminal section; belongs to the pantothenate synthetase family. It in the C-terminal section; belongs to the cytidylate kinase family. Type 1 subfamily.

It localises to the cytoplasm. The enzyme catalyses (R)-pantoate + beta-alanine + ATP = (R)-pantothenate + AMP + diphosphate + H(+). The catalysed reaction is CMP + ATP = CDP + ADP. It catalyses the reaction dCMP + ATP = dCDP + ADP. It functions in the pathway cofactor biosynthesis; (R)-pantothenate biosynthesis; (R)-pantothenate from (R)-pantoate and beta-alanine: step 1/1. Catalyzes the condensation of pantoate with beta-alanine in an ATP-dependent reaction via a pantoyl-adenylate intermediate. Functionally, catalyzes the transfer of a phosphate group from ATP to either CMP or dCMP to form CDP or dCDP and ADP, respectively. This is Bifunctional pantoate ligase/cytidylate kinase from Synechococcus sp. (strain CC9605).